A 687-amino-acid chain; its full sequence is MFAFRNRAVTQTLLVRRYSTKRIPQNLTEKIVQRYAVGLPEGKQVQSGDYVSIRPSHCMTHDNSWPVATKFKGLGAKAVKDNRQVVMTLDHDVQNKSEKNLEKYANIENFAGEQGIDFYPAGRGIGHQVMVEEGYAFPYNLTVASDSHSNMYGGIGCLGTPIVRTDAASVWATGQTWWQIPPVARVELKGQLPAGVFGKDVIIALCGIFNNDEVLNHAIEFVGDGVEHLSVDERLTIANMTTEWGALTGLFPVDETLRQWYEYRLTRLPQPHARVNDGTVAALKDAVQADTDAKYAKNLTIDLSTLSPFLSGPNSVKVYNSLADLSAQDIKINKAYLVSCTNSRLSDIEAAANVIKNNKVAEGVEFYVAAASSFVQKDAEASGAWQTLINAGAKPLPAGCGPCIGLGTGLLEDGEVGISATNRNFKGRMGSKDALAYLASPEVVAASAVLGKIGFPEEVYGSPVPGAKGVSSSISVTEAVEAEADAEAAESDPAPSGGVLDGFPAQITGELVLCDADNINTDGIYPGKYTYQDDVPREKMAEVCMENYDPDFGSKTGAGDIIVSGFNFGTGSSREQAATCILARDMQLVIAGSFGNIFSRNSINNALLTLEIPALINKLRKRYEGQPAELTRRTGWFATWDVPAATVTVTDGKNGPVILKQKVGELGQNLQEIIVKGGLEGWVKAQL.

Residues 1-18 (MFAFRNRAVTQTLLVRRY) constitute a mitochondrion transit peptide. [4Fe-4S] cluster-binding residues include Cys-340, Cys-400, and Cys-403. Acidic residues predominate over residues 481–490 (EAEADAEAAE). The disordered stretch occupies residues 481 to 500 (EAEADAEAAESDPAPSGGVL).

The protein belongs to the aconitase/IPM isomerase family. The cofactor is [4Fe-4S] cluster.

It is found in the mitochondrion. The enzyme catalyses (2R,3S)-homoisocitrate = cis-homoaconitate + H2O. It functions in the pathway amino-acid biosynthesis; L-lysine biosynthesis via AAA pathway; L-alpha-aminoadipate from 2-oxoglutarate: step 3/5. Catalyzes the reversible hydration of cis-homoaconitate to (2R,3S)-homoisocitrate, a step in the alpha-aminoadipate pathway for lysine biosynthesis. The chain is Homoaconitase, mitochondrial (LYS4) from Yarrowia lipolytica (strain CLIB 122 / E 150) (Yeast).